Consider the following 212-residue polypeptide: Adenylate kinase (212 aa).

14–19 (GSGKGT) lines the ATP pocket. The tract at residues 34–63 (STGDLFRKKISEDSQFAAQIQNYLSSGSYV) is NMP. Residues Thr35, Arg40, 61–63 (SYV), 89–92 (GYPR), and Gln96 contribute to the AMP site. Residues 126–163 (QRLFCQKCQKSYNLLLAKPKNGLKCDLDNTDLITRNDD) form an LID region. Arg127 serves as a coordination point for ATP. Zn(2+) is bound by residues Cys130 and Cys133. An ATP-binding site is contributed by 136-137 (SY). Zn(2+)-binding residues include Cys150 and Asp153. Arg160 and Arg171 together coordinate AMP. Gln199 provides a ligand contact to ATP.

The protein belongs to the adenylate kinase family. In terms of assembly, monomer.

It is found in the cytoplasm. The enzyme catalyses AMP + ATP = 2 ADP. It participates in purine metabolism; AMP biosynthesis via salvage pathway; AMP from ADP: step 1/1. In terms of biological role, catalyzes the reversible transfer of the terminal phosphate group between ATP and AMP. Plays an important role in cellular energy homeostasis and in adenine nucleotide metabolism. The protein is Adenylate kinase of Mesomycoplasma hyopneumoniae (strain 7448) (Mycoplasma hyopneumoniae).